The primary structure comprises 290 residues: Probable 2-(5''-triphosphoribosyl)-3'-dephosphocoenzyme-A synthase (290 aa).

This sequence belongs to the CitG/MdcB family.

The catalysed reaction is 3'-dephospho-CoA + ATP = 2'-(5''-triphospho-alpha-D-ribosyl)-3'-dephospho-CoA + adenine. Its function is as follows. Involved in the formation of 2-(5''-phosphoribosyl)-3'-dephosphocoenzyme-A, the prosthetic group of the acyl-carrier protein of the malonate decarboxylase. The sequence is that of Probable 2-(5''-triphosphoribosyl)-3'-dephosphocoenzyme-A synthase from Pseudomonas fluorescens (strain Pf0-1).